The chain runs to 347 residues: 8-amino-8-demethylriboflavin N,N-dimethyltransferase (347 aa).

S-adenosyl-L-methionine-binding positions include Asp209 and 235–237 (GDF).

The protein belongs to the class I-like SAM-binding methyltransferase superfamily. Cation-independent O-methyltransferase family. In terms of assembly, homodimer.

It catalyses the reaction 8-amino-8-demethylriboflavin + 2 S-adenosyl-L-methionine = roseoflavin + 2 S-adenosyl-L-homocysteine + 2 H(+). Its pathway is antibiotic biosynthesis. In terms of biological role, catalyzes the S-adenosyl methionine-dependent conversion of 8-amino-8-demethyl-D-riboflavin (AF) into 8-methylamino-8-demethyl-D-riboflavin (MAF) and roseoflavin (RoF), the last two steps in the biosynthesis of the antibiotic roseoflavin. The sequence is that of 8-amino-8-demethylriboflavin N,N-dimethyltransferase from Streptomyces davaonensis (strain DSM 101723 / JCM 4913 / KCC S-0913 / 768).